A 931-amino-acid chain; its full sequence is Valine--tRNA ligase (931 aa).

The 'HIGH' region signature appears at 42-52 (PNVTGSLHMGH). A 'KMSKS' region motif is present at residues 523-527 (KMSKS). K526 serves as a coordination point for ATP. Residues 859 to 931 (MAGLIDKEAE…EEQLEKIKYL (73 aa)) are a coiled coil.

The protein belongs to the class-I aminoacyl-tRNA synthetase family. ValS type 1 subfamily. Monomer.

It is found in the cytoplasm. The catalysed reaction is tRNA(Val) + L-valine + ATP = L-valyl-tRNA(Val) + AMP + diphosphate. In terms of biological role, catalyzes the attachment of valine to tRNA(Val). As ValRS can inadvertently accommodate and process structurally similar amino acids such as threonine, to avoid such errors, it has a 'posttransfer' editing activity that hydrolyzes mischarged Thr-tRNA(Val) in a tRNA-dependent manner. The polypeptide is Valine--tRNA ligase (Alcanivorax borkumensis (strain ATCC 700651 / DSM 11573 / NCIMB 13689 / SK2)).